Here is a 379-residue protein sequence, read N- to C-terminus: Succinyl-diaminopimelate desuccinylase (379 aa).

His70 contributes to the Zn(2+) binding site. Asp72 is a catalytic residue. Asp103 contacts Zn(2+). Glu137 (proton acceptor) is an active-site residue. The Zn(2+) site is built by Glu138, Glu166, and His352.

The protein belongs to the peptidase M20A family. DapE subfamily. As to quaternary structure, homodimer. Requires Zn(2+) as cofactor. The cofactor is Co(2+).

The catalysed reaction is N-succinyl-(2S,6S)-2,6-diaminopimelate + H2O = (2S,6S)-2,6-diaminopimelate + succinate. It functions in the pathway amino-acid biosynthesis; L-lysine biosynthesis via DAP pathway; LL-2,6-diaminopimelate from (S)-tetrahydrodipicolinate (succinylase route): step 3/3. Functionally, catalyzes the hydrolysis of N-succinyl-L,L-diaminopimelic acid (SDAP), forming succinate and LL-2,6-diaminopimelate (DAP), an intermediate involved in the bacterial biosynthesis of lysine and meso-diaminopimelic acid, an essential component of bacterial cell walls. This is Succinyl-diaminopimelate desuccinylase from Burkholderia vietnamiensis (strain G4 / LMG 22486) (Burkholderia cepacia (strain R1808)).